The following is a 446-amino-acid chain: Cyclin-F2-2 (446 aa).

Residues 191–216 (YNGDNDAPAPDNSTASRPQLCAPYDD) are disordered.

This sequence belongs to the cyclin family. Cyclin F subfamily.

In Oryza sativa subsp. japonica (Rice), this protein is Cyclin-F2-2 (CYCF2-2).